The sequence spans 171 residues: NADP-reducing hydrogenase subunit HndA (171 aa).

The [2Fe-2S] cluster site is built by cysteine 98, cysteine 103, cysteine 139, and cysteine 143.

The protein belongs to the complex I 24 kDa subunit family. In terms of assembly, heterotetramer composed of HndA, HndB, HndC and HndD subunits. HndA and HndB could form a heterodimeric intermediate in the electron transfer between the active site of hydrogenase subunit HndD and the NADP reduction site of the reducing subunit HndC. It depends on [2Fe-2S] cluster as a cofactor.

It catalyses the reaction H2 + NADP(+) = NADPH + H(+). Inhibited by oxygen. Its function is as follows. Catalyzes the reduction of NADP in the presence of molecular H(2) to yield NADPH. The sequence is that of NADP-reducing hydrogenase subunit HndA (hndA) from Solidesulfovibrio fructosivorans (Desulfovibrio fructosivorans).